The sequence spans 249 residues: tRNA pseudouridine synthase A (249 aa).

Asp-53 (nucleophile) is an active-site residue. Residue Tyr-111 coordinates substrate.

This sequence belongs to the tRNA pseudouridine synthase TruA family. Homodimer.

The catalysed reaction is uridine(38/39/40) in tRNA = pseudouridine(38/39/40) in tRNA. Formation of pseudouridine at positions 38, 39 and 40 in the anticodon stem and loop of transfer RNAs. In Streptococcus pneumoniae (strain P1031), this protein is tRNA pseudouridine synthase A.